The chain runs to 523 residues: Cilia- and flagella-associated protein 157 (523 aa).

Residues 1–31 (MAPKKKPNKGGKEMQGKKIGGKKDASGTKTP) are disordered. The span at 10 to 26 (GGKEMQGKKIGGKKDAS) shows a compositional bias: basic and acidic residues. Threonine 30 bears the Phosphothreonine mark. Coiled coils occupy residues 32-191 (ELAM…LEKK), 248-274 (VQLLQENEQLKGTQNKLCQQLEMLENT), and 302-371 (GTEE…VLIQ). Residues 419 to 440 (QPDMGSHQDKQPQGLSKESQRI) form a disordered region. Positions 429-440 (QPQGLSKESQRI) are enriched in polar residues.

The protein belongs to the CFAP157 family. Interacts with TUBB and TUBA4A. Interacts with CEP350. In terms of tissue distribution, specifically expressed in tissues containing motile cilia.

The protein localises to the cytoplasm. The protein resides in the cytoskeleton. Its subcellular location is the cilium basal body. Its function is as follows. Specifically required during spermatogenesis for flagellum morphogenesis and sperm motility. May be required to suppress the formation of supernumerary axonemes and ensure a correct ultrastructure. The polypeptide is Cilia- and flagella-associated protein 157 (Mus musculus (Mouse)).